The primary structure comprises 273 residues: 2,3,4,5-tetrahydropyridine-2,6-dicarboxylate N-succinyltransferase (273 aa).

The protein belongs to the transferase hexapeptide repeat family.

The protein resides in the cytoplasm. It carries out the reaction (S)-2,3,4,5-tetrahydrodipicolinate + succinyl-CoA + H2O = (S)-2-succinylamino-6-oxoheptanedioate + CoA. It functions in the pathway amino-acid biosynthesis; L-lysine biosynthesis via DAP pathway; LL-2,6-diaminopimelate from (S)-tetrahydrodipicolinate (succinylase route): step 1/3. This Bordetella petrii (strain ATCC BAA-461 / DSM 12804 / CCUG 43448) protein is 2,3,4,5-tetrahydropyridine-2,6-dicarboxylate N-succinyltransferase.